A 211-amino-acid polypeptide reads, in one-letter code: MKLRTVAASLLLMLSATTVRASAADVGAPVPIYTEAELIKLIEQNKHLQRVRADNCQLVEDIVARATRINLPAYEFLYGDMLAWGVCVEQDVELGLYYMENAAQQGLPAALEQIGRYYSRGTLVQQDKERAIPYLREAASMGNLNARIHLAELLLRDYGSPLDYEDAYRWLYNSVTADQRQHKRIAVLRRGLEQRMPQNIVARAKRRDMFW.

Sel1-like repeat units lie at residues 72–107, 108–143, and 144–179; these read PAYEFLYGDMLAWGVCVEQDVELGLYYMENAAQQGL, PAALEQIGRYYSRGTLVQQDKERAIPYLREAASMGN, and LNARIHLAELLLRDYGSPLDYEDAYRWLYNSVTADQ.

It is found in the cell inner membrane. Functionally, the power to drive the polar flagellar rotary motor of V.parahaemolyticus is derived from the transmembrane potential of sodium ions. Force is generated by the motor on coupling of the movement of ions across the membrane to rotation of the flagellum. MotX interacts with MotY, which is the presumed stationary component of the motor. MotX may form a sodium channel. This is Sodium-type polar flagellar protein MotX (motX) from Vibrio parahaemolyticus serotype O3:K6 (strain RIMD 2210633).